A 451-amino-acid polypeptide reads, in one-letter code: Photosystem II CP43 reaction center protein (451 aa).

The Cytoplasmic portion of the chain corresponds to 1–46 (ATNRDQESSGFAWWAGNARLINLSGKLLGAHVAHAGLIVFWAGAMT). 3 residues coordinate chlorophyll a: Trp13, Leu27, and Ala30. Residues 47–71 (LFELAHFIPEKPMYEQGLILIPHIA) form a helical membrane-spanning segment. Topologically, residues 72 to 111 (TLGWGVGPGGEVVDTFPFFVVGVVHLISSAVLGFGGVYHA) are lumenal. Positions 92 and 106 each coordinate chlorophyll a. Residues 112–133 (IRGPETLEEYSSFFGYDWKDKN) traverse the membrane as a helical segment. Residues 134–155 (KMTTILGFHLIVLGIGALLLVA) lie on the Cytoplasmic side of the membrane. Ile138 provides a ligand contact to chlorophyll a. The helical transmembrane segment at 156-178 (KAMFFGGLYDTWAPGGGDVRVIT) threads the bilayer. The Lumenal portion of the chain corresponds to 179 to 232 (NPTLDPRVIFGYLLKSPFGGEGWIVSVNNLEDVVGGHIWIGLICIAGGIWHILT). Positions 211 and 225 each coordinate chlorophyll a. The chain crosses the membrane as a helical span at residues 233–253 (TPFGWARRAFIWSGEAYLSYS). Over 254 to 268 (LGALSMMGFIATCFV) the chain is Cytoplasmic. The chain crosses the membrane as a helical span at residues 269 to 290 (WFNNTVYPSEFYGPTGPEASQA). Residues 291–424 (QAMTFLIRDQ…FLVGHLWHAG (134 aa)) lie on the Lumenal side of the membrane. Glu345 provides a ligand contact to [CaMn4O5] cluster. Residues Leu404, Phe415, and Gly418 each contribute to the chlorophyll a site. The helical transmembrane segment at 425 to 449 (RARAAAAGFEKGIDRESEPVLSMPS) threads the bilayer. Residues 450-451 (LD) lie on the Cytoplasmic side of the membrane.

The protein belongs to the PsbB/PsbC family. PsbC subfamily. In terms of assembly, PSII is composed of 1 copy each of membrane proteins PsbA, PsbB, PsbC, PsbD, PsbE, PsbF, PsbH, PsbI, PsbJ, PsbK, PsbL, PsbM, PsbT, PsbX, PsbY, PsbZ, Psb30/Ycf12, peripheral proteins PsbO, CyanoQ (PsbQ), PsbU, PsbV and a large number of cofactors. It forms dimeric complexes. The cofactor is Binds multiple chlorophylls and provides some of the ligands for the Ca-4Mn-5O cluster of the oxygen-evolving complex. It may also provide a ligand for a Cl- that is required for oxygen evolution. PSII binds additional chlorophylls, carotenoids and specific lipids..

The protein resides in the cellular thylakoid membrane. In terms of biological role, one of the components of the core complex of photosystem II (PSII). It binds chlorophyll and helps catalyze the primary light-induced photochemical processes of PSII. PSII is a light-driven water:plastoquinone oxidoreductase, using light energy to abstract electrons from H(2)O, generating O(2) and a proton gradient subsequently used for ATP formation. The chain is Photosystem II CP43 reaction center protein from Thermostichus vulcanus (Synechococcus vulcanus).